The primary structure comprises 729 residues: MTSPEGAQNKEIDCLSPEAQRLAEARLAAKRAARAEAREIRMKELERQQKEVEERPDKDFAEKGSRNMPSLSAATLASLGGTSSRRGSGDTSISMDTEASIREIKDSLAEVEEKYKKAMVSNAQLDNEKTNFMYQVDTLKDMLLELEEQLAESQRQYEEKNKEFEREKHAHSILQFQFAEVKEALRQREEMLEKHGIILNSEIATNGETSDTVNDVGYQAPTKITKEELNALKSAGEGTLGKAKEVEVKKEIVEKVGQRETLQNSEQEQPKPNTGKDCVDRGVSHPGEKAENQRPAEDSALSPGPLAGAKCEQQVQSQDQENTSDLKNSEQIESHKVTNKSDSRASNSPEQSSCLEGLDSEVPGPTEDLKTDLGKGSFEPCPDYILGQTAEIDKVTCTDSRGTGGNQREDEVQAGDTTVEDQVGTVASGPAKQSKGTENHGESCLKDGLGQSSERELTQEVAEPEEAIVQIPQAGGENTITKADDAEGRDEKPIQAEAQASPGAPINQSGHQDTTGPGSTDAQRTPPHAKERKKQGKSEQQAEALDSPQKKTKNKKKKNKKKKAATPAETCRDANEELNCQDPDVGDMEEEERLQVTDKKQASGSPEQKIRAGSREPVEDPQSGSSGKQNKVEEDGPTEGPTDILDQNSPQCEDREISPVGEKGPQCDTSQIGSEEGHVTSQHGGQAVENHNLDNSDLSGQLEGFNSESGGQAREEVGNSKSKEDCTMS.

Thr-2 bears the N-acetylthreonine mark. Ser-16 bears the Phosphoserine mark. Over residues 40–65 the composition is skewed to basic and acidic residues; it reads IRMKELERQQKEVEERPDKDFAEKGS. The tract at residues 40–98 is disordered; sequence IRMKELERQQKEVEERPDKDFAEKGSRNMPSLSAATLASLGGTSSRRGSGDTSISMDTE. The span at 78 to 94 shows a compositional bias: low complexity; that stretch reads SLGGTSSRRGSGDTSIS. Residues Ser-83, Ser-84, Ser-88, Asp-90, Ser-92, and Thr-97 each carry the phosphoserine modification. A coiled-coil region spans residues 94–194; the sequence is SMDTEASIRE…LRQREEMLEK (101 aa). Lys-249 participates in a covalent cross-link: Glycyl lysine isopeptide (Lys-Gly) (interchain with G-Cter in SUMO1). A disordered region spans residues 253–729; sequence VEKVGQRETL…SKSKEDCTMS (477 aa). The span at 260–272 shows a compositional bias: polar residues; it reads ETLQNSEQEQPKP. Basic and acidic residues predominate over residues 277–297; it reads DCVDRGVSHPGEKAENQRPAE. At Ser-302 the chain carries Phosphoserine. Positions 313–326 are enriched in polar residues; the sequence is QQVQSQDQENTSDL. Residues 327–343 show a composition bias toward basic and acidic residues; that stretch reads KNSEQIESHKVTNKSDS. Over residues 344 to 354 the composition is skewed to polar residues; the sequence is RASNSPEQSSC. Phosphoserine occurs at positions 346 and 348. 2 stretches are compositionally biased toward basic and acidic residues: residues 435–445 and 482–494; these read KGTENHGESCL and KADDAEGRDEKPI. Residues 465–567 form a DNA-binding region; that stretch reads EEAIVQIPQA…KNKKKKAATP (103 aa). Residues 506 to 523 are compositionally biased toward polar residues; that stretch reads INQSGHQDTTGPGSTDAQ. Residues Ser-538 and Ser-547 each carry the phosphoserine modification. Over residues 550 to 564 the composition is skewed to basic residues; the sequence is KKTKNKKKKNKKKKA. Basic and acidic residues predominate over residues 608–618; sequence QKIRAGSREPV. Phosphoserine is present on residues Ser-614 and Ser-670. Composition is skewed to polar residues over residues 667-684 and 693-710; these read CDTSQIGSEEGHVTSQHG and LDNSDLSGQLEGFNSESG. The segment covering 713 to 729 has biased composition (basic and acidic residues); that stretch reads AREEVGNSKSKEDCTMS.

The protein belongs to the LRRFIP family. As to quaternary structure, homodimer. May also form higher oligomers. Interacts with FLII. Interacts with MYD88. Competes with FLII for MyD88-binding, even in the absence of LPS. In terms of tissue distribution, ubiquitously expressed.

Its subcellular location is the nucleus. The protein localises to the cytoplasm. In terms of biological role, transcriptional repressor which preferentially binds to the GC-rich consensus sequence (5'-AGCCCCCGGCG-3') and may regulate expression of TNF, EGFR and PDGFA. May control smooth muscle cells proliferation following artery injury through PDGFA repression. May also bind double-stranded RNA. Positively regulates Toll-like receptor (TLR) signaling in response to agonist probably by competing with the negative FLII regulator for MYD88-binding. The polypeptide is Leucine-rich repeat flightless-interacting protein 1 (Lrrfip1) (Mus musculus (Mouse)).